The sequence spans 414 residues: Eukaryotic initiation factor 4A-1 (414 aa).

The Q motif motif lies at 41 to 69; sequence ESFDDMGLQENLLRGIYAYGFEKPSAIQQ. The region spanning 72–242 is the Helicase ATP-binding domain; the sequence is IVPFCKGLDV…RKFMNKPVRI (171 aa). ATP is bound at residue 85 to 92; it reads AQSGTGKT. The DEAD box motif lies at 190–193; it reads DEAD. One can recognise a Helicase C-terminal domain in the interval 253 to 414; that stretch reads GIKQFYVNVE…ELPANVADLL (162 aa).

Belongs to the DEAD box helicase family. eIF4A subfamily. As to quaternary structure, eIF4F is a multi-subunit complex, the composition of which varies with external and internal environmental conditions. It is composed of at least EIF4A, EIF4E and EIF4G.

It carries out the reaction ATP + H2O = ADP + phosphate + H(+). Functionally, ATP-dependent RNA helicase which is a subunit of the eIF4F complex involved in cap recognition and is required for mRNA binding to ribosome. In the current model of translation initiation, eIF4A unwinds RNA secondary structures in the 5'-UTR of mRNAs which is necessary to allow efficient binding of the small ribosomal subunit, and subsequent scanning for the initiator codon. In Oryza sativa subsp. japonica (Rice), this protein is Eukaryotic initiation factor 4A-1.